Reading from the N-terminus, the 118-residue chain is Protein TusC (118 aa).

Belongs to the DsrF/TusC family. In terms of assembly, heterohexamer, formed by a dimer of trimers. The hexameric TusBCD complex contains 2 copies each of TusB, TusC and TusD. The TusBCD complex interacts with TusE.

It is found in the cytoplasm. Functionally, part of a sulfur-relay system required for 2-thiolation of 5-methylaminomethyl-2-thiouridine (mnm(5)s(2)U) at tRNA wobble positions. This Salmonella typhi protein is Protein TusC.